A 258-amino-acid chain; its full sequence is MNNLNDPPNWNIRPNSRADGGDGSRWNYALLVPMLGLAAFRWIWSRESQKEIEKEKEACRQRTAAFQRDLEARYHATISESRRAVARLSLELEKEQNRTTSYREALISQGRKMVEEKKLLEQERAQVLQEKRQPLRSAYLSCLDKEADWQRRARLLLREFEEALAERQSIYCSLVLPRGRRLDIEKGLLVRASTDPLAVDLEMAAGLSDIFKHDTHCGGVWNTSKRQNGRLMWLYLQYWELVVELKKFKRVEKAILEK.

The stretch at 50 to 170 forms a coiled coil; the sequence is KEIEKEKEAC…EEALAERQSI (121 aa).

The chain is Coiled-coil domain-containing protein 127 (CCDC127) from Sus scrofa (Pig).